An 807-amino-acid chain; its full sequence is Lysyl oxidase homolog 3B (807 aa).

Positions 1–24 (MELHQWCRHIIVFLLNVWIPSCFA) are cleaved as a signal peptide. SRCR domains are found at residues 49-150 (FRLS…VICK), 175-288 (VRLR…VSCV), 309-409 (TRLK…VRCN), 419-470 (VRIL…LGYA), and 476-579 (VRLS…VICS). Cystine bridges form between Cys-75–Cys-139, Cys-88–Cys-149, Cys-119–Cys-129, Cys-207–Cys-277, Cys-220–Cys-287, Cys-254–Cys-264, Cys-334–Cys-398, Cys-347–Cys-408, and Cys-378–Cys-388. Asn-272 is a glycosylation site (N-linked (GlcNAc...) asparagine). Asn-392 carries an N-linked (GlcNAc...) asparagine glycan. 2 cysteine pairs are disulfide-bonded: Cys-514–Cys-578 and Cys-547–Cys-557. A glycan (N-linked (GlcNAc...) asparagine) is linked at Asn-536. Asn-679 is a glycosylation site (N-linked (GlcNAc...) asparagine). Positions 688 to 724 (KASFCLEDTDCDEGVSKRYKCANFGEQGITVGCWDLY) form a cross-link, lysine tyrosylquinone (Lys-Tyr). A 2',4',5'-topaquinone modification is found at Tyr-724.

The protein belongs to the lysyl oxidase family. Requires Cu cation as cofactor. Lysine tyrosylquinone residue serves as cofactor. The lysine tyrosylquinone cross-link (LTQ) is generated by condensation of the epsilon-amino group of a lysine with a topaquinone produced by oxidation of tyrosine.

Its subcellular location is the secreted. It localises to the extracellular space. It is found in the cytoplasm. The protein localises to the nucleus. It carries out the reaction L-lysyl-[protein] + O2 + H2O = (S)-2-amino-6-oxohexanoyl-[protein] + H2O2 + NH4(+). The catalysed reaction is N(6)-acetyl-L-lysyl-[protein] + O2 + H2O = acetamide + (S)-2-amino-6-oxohexanoyl-[protein] + H2O2. In terms of biological role, protein-lysine 6-oxidase that mediates the oxidation of peptidyl lysine residues to allysine in target proteins. Catalyzes the post-translational oxidative deamination of peptidyl lysine residues in precursors of elastin and different types of collagens, a prerequisite in the formation of cross-links between collagens and elastin. Can mediate oxidation of lysine residues that are acetylated. Also able to catalyze deacetylation of lysine residues. Required for maturation of neural crest derived cartilage elements. The sequence is that of Lysyl oxidase homolog 3B from Danio rerio (Zebrafish).